A 255-amino-acid chain; its full sequence is Hydroxyacylglutathione hydrolase (255 aa).

Zn(2+) is bound by residues His-56, His-58, Asp-60, His-61, His-114, Asp-133, and His-171.

Belongs to the metallo-beta-lactamase superfamily. Glyoxalase II family. In terms of assembly, monomer. The cofactor is Zn(2+).

It catalyses the reaction an S-(2-hydroxyacyl)glutathione + H2O = a 2-hydroxy carboxylate + glutathione + H(+). It participates in secondary metabolite metabolism; methylglyoxal degradation; (R)-lactate from methylglyoxal: step 2/2. Functionally, thiolesterase that catalyzes the hydrolysis of S-D-lactoyl-glutathione to form glutathione and D-lactic acid. The protein is Hydroxyacylglutathione hydrolase of Cereibacter sphaeroides (strain ATCC 17025 / ATH 2.4.3) (Rhodobacter sphaeroides).